Here is a 351-residue protein sequence, read N- to C-terminus: MLQINVKKQLGQLALQANIQVPDQGVTAIFGLSGSGKTSLINLVSGLIQPDEGFICLNDRTLVDMESQESLPTHLRKIGYVFQDARLFPHYTVKGNLRYGMKNVSQDDFNYIVDLLGITHLLKRYPLTLSGGEKQRVAIGRALLTDPDILLMDEPLSALDVPRKRELMQYLERLSKEINIPILYVTHSLDELLRLADRVVLMENGIVKAYDRVEKIWNSPIFAPWKGESEQSSVLALPVHLHNPPYKMTALSLGEQVLWIHQVPANVGERVRVCIYSSDVSITLQKPEQTSIRNILRGKITQIEIQDSRVDLAVLVEGHKIWASISKWAQNELRFAIGQDVYVQIKAVSVM.

An ABC transporter domain is found at 1–229 (MLQINVKKQL…PIFAPWKGES (229 aa)). 31–38 (GLSGSGKT) lines the ATP pocket. The region spanning 289–351 (QTSIRNILRG…YVQIKAVSVM (63 aa)) is the Mop domain.

It belongs to the ABC transporter superfamily. Molybdate importer (TC 3.A.1.8) family. In terms of assembly, the complex is composed of two ATP-binding proteins (ModC), two transmembrane proteins (ModB) and a solute-binding protein (ModA).

The protein resides in the cell inner membrane. It carries out the reaction molybdate(out) + ATP + H2O = molybdate(in) + ADP + phosphate + H(+). Part of the ABC transporter complex ModABC involved in molybdenum import. Responsible for energy coupling to the transport system. The protein is Molybdenum import ATP-binding protein ModC of Haemophilus influenzae (strain ATCC 51907 / DSM 11121 / KW20 / Rd).